The chain runs to 341 residues: Putative methyltransferase YGR283C (341 aa).

This sequence belongs to the class IV-like SAM-binding methyltransferase superfamily.

It is found in the nucleus. The protein resides in the nucleolus. This chain is Putative methyltransferase YGR283C, found in Saccharomyces cerevisiae (strain ATCC 204508 / S288c) (Baker's yeast).